The primary structure comprises 390 residues: Alpha-2B adrenergic receptor (390 aa).

The helical transmembrane segment at 1 to 25 threads the bilayer; the sequence is AIATVITFLILFTIFGNSLVILAVL. Residues 26-36 lie on the Cytoplasmic side of the membrane; that stretch reads TSRSLRAPQNL. A helical membrane pass occupies residues 37–62; the sequence is FLVSLAAADIMVATLIIPFSLANELL. Over 63–72 the chain is Extracellular; the sequence is GYWYFRRTWC. The cysteines at positions 72 and 151 are disulfide-linked. A helical transmembrane segment spans residues 73–95; it reads EVYLALDVLFCTSSIVHLCAISL. The Cytoplasmic segment spans residues 96-117; that stretch reads DRYWAVSRALEYNSKRTPRRIK. A helical transmembrane segment spans residues 118 to 140; that stretch reads CIILTVWLIAAAISLPPLIYKGD. Residues 141–156 lie on the Extracellular side of the membrane; the sequence is QGPQPRGRPQCKLNQE. The chain crosses the membrane as a helical span at residues 157–180; that stretch reads AWYILSSSIGSFFAPCLIMILVYL. Residues 181–354 are Cytoplasmic-facing; it reads RIYLIAKRSH…LTREKRFTFV (174 aa). 2 disordered regions span residues 191–218 and 233–311; these read RRGP…PSAL and EANG…PLQQ. The segment covering 280-292 has biased composition (acidic residues); sequence LEEEADKEEEEEC. A helical membrane pass occupies residues 355–378; the sequence is LAVVIGVFVLCWFPFFFSYSLGAI. Topologically, residues 379 to 390 are extracellular; sequence CPQHCKVPHGLF.

This sequence belongs to the G-protein coupled receptor 1 family. Adrenergic receptor subfamily. ADRA2B sub-subfamily. Interacts with RAB26. Interacts with PPP1R9B. Interacts with GGA1, GGA2 and GGA3.

It is found in the cell membrane. Functionally, alpha-2 adrenergic receptors mediate the catecholamine-induced inhibition of adenylate cyclase through the action of G proteins. The protein is Alpha-2B adrenergic receptor (ADRA2B) of Dugong dugon (Dugong).